Here is a 932-residue protein sequence, read N- to C-terminus: Glycine dehydrogenase (decarboxylating) (932 aa).

Position 685 is an N6-(pyridoxal phosphate)lysine (lysine 685).

Belongs to the GcvP family. As to quaternary structure, the glycine cleavage system is composed of four proteins: P, T, L and H. Pyridoxal 5'-phosphate is required as a cofactor.

It carries out the reaction N(6)-[(R)-lipoyl]-L-lysyl-[glycine-cleavage complex H protein] + glycine + H(+) = N(6)-[(R)-S(8)-aminomethyldihydrolipoyl]-L-lysyl-[glycine-cleavage complex H protein] + CO2. In terms of biological role, the glycine cleavage system catalyzes the degradation of glycine. The P protein binds the alpha-amino group of glycine through its pyridoxal phosphate cofactor; CO(2) is released and the remaining methylamine moiety is then transferred to the lipoamide cofactor of the H protein. In Brucella melitensis biotype 2 (strain ATCC 23457), this protein is Glycine dehydrogenase (decarboxylating).